A 136-amino-acid polypeptide reads, in one-letter code: Nucleoside diphosphate kinase (136 aa).

Positions 10, 58, 86, 92, 104, and 114 each coordinate ATP. His117 (pros-phosphohistidine intermediate) is an active-site residue.

It belongs to the NDK family. In terms of assembly, homotetramer. It depends on Mg(2+) as a cofactor.

It localises to the cytoplasm. It carries out the reaction a 2'-deoxyribonucleoside 5'-diphosphate + ATP = a 2'-deoxyribonucleoside 5'-triphosphate + ADP. It catalyses the reaction a ribonucleoside 5'-diphosphate + ATP = a ribonucleoside 5'-triphosphate + ADP. Its function is as follows. Major role in the synthesis of nucleoside triphosphates other than ATP. The ATP gamma phosphate is transferred to the NDP beta phosphate via a ping-pong mechanism, using a phosphorylated active-site intermediate. This chain is Nucleoside diphosphate kinase, found in Corynebacterium jeikeium (strain K411).